The chain runs to 148 residues: Large-conductance mechanosensitive channel (148 aa).

Transmembrane regions (helical) follow at residues 16 to 36 and 89 to 109; these read VMDL…VNSI and GSFI…FLMV.

The protein belongs to the MscL family. As to quaternary structure, homopentamer.

It localises to the cell inner membrane. Its function is as follows. Channel that opens in response to stretch forces in the membrane lipid bilayer. May participate in the regulation of osmotic pressure changes within the cell. The sequence is that of Large-conductance mechanosensitive channel from Paraburkholderia phytofirmans (strain DSM 17436 / LMG 22146 / PsJN) (Burkholderia phytofirmans).